Reading from the N-terminus, the 103-residue chain is Small ribosomal subunit protein uS10 (103 aa).

Belongs to the universal ribosomal protein uS10 family. Part of the 30S ribosomal subunit.

Its function is as follows. Involved in the binding of tRNA to the ribosomes. The protein is Small ribosomal subunit protein uS10 of Rubrobacter xylanophilus (strain DSM 9941 / JCM 11954 / NBRC 16129 / PRD-1).